We begin with the raw amino-acid sequence, 842 residues long: Elongation factor 2 (842 aa).

The tr-type G domain occupies 17-253 (TNVRNMSVIA…LWGDSYFNPK (237 aa)). Residues 26–33 (AHVDHGKS), 158–161 (NKVD), and 213–215 (SGL) each bind GTP. At His699 the chain carries Diphthamide.

Belongs to the TRAFAC class translation factor GTPase superfamily. Classic translation factor GTPase family. EF-G/EF-2 subfamily.

The protein resides in the cytoplasm. It carries out the reaction GTP + H2O = GDP + phosphate + H(+). Its function is as follows. Catalyzes the GTP-dependent ribosomal translocation step during translation elongation. During this step, the ribosome changes from the pre-translocational (PRE) to the post-translocational (POST) state as the newly formed A-site-bound peptidyl-tRNA and P-site-bound deacylated tRNA move to the P and E sites, respectively. Catalyzes the coordinated movement of the two tRNA molecules, the mRNA and conformational changes in the ribosome. The polypeptide is Elongation factor 2 (EFT1) (Naumovozyma castellii (Yeast)).